The chain runs to 404 residues: Coenzyme F420H(2) oxidase (404 aa).

Residues His-84, Glu-86, Asp-88, His-89, His-152, Asp-170, and His-233 each coordinate Fe cation. Positions 259–399 constitute a Flavodoxin-like domain; that stretch reads VTVIYDTMHH…ACFEAGRRLA (141 aa). FMN is bound by residues 265–270, 317–320, and 351–356; these read TMHHST, AIYD, and SMGGRG.

The protein in the N-terminal section; belongs to the zinc metallo-hydrolase group 3 family. The cofactor is FMN. Fe cation serves as cofactor.

It catalyses the reaction 2 reduced coenzyme F420-(gamma-L-Glu)(n) + O2 = 2 oxidized coenzyme F420-(gamma-L-Glu)(n) + 2 H2O + 2 H(+). Functionally, catalyzes the oxidation of F420H(2) with O(2). May be involved in O(2) detoxification, reducing the intracellular O(2) concentration to a level allowing growth at the expense of methane formation. This chain is Coenzyme F420H(2) oxidase, found in Methanothermobacter thermautotrophicus (strain ATCC 29096 / DSM 1053 / JCM 10044 / NBRC 100330 / Delta H) (Methanobacterium thermoautotrophicum).